A 284-amino-acid polypeptide reads, in one-letter code: Diaminopimelate epimerase (284 aa).

Asparagine 14 and asparagine 67 together coordinate substrate. Cysteine 76 acts as the Proton donor in catalysis. Substrate contacts are provided by residues 77–78, asparagine 166, asparagine 199, and 217–218; these read GN and ER. Cysteine 226 (proton acceptor) is an active-site residue. Residue 227–228 participates in substrate binding; the sequence is GT.

It belongs to the diaminopimelate epimerase family. Homodimer.

The protein localises to the cytoplasm. The catalysed reaction is (2S,6S)-2,6-diaminopimelate = meso-2,6-diaminopimelate. It participates in amino-acid biosynthesis; L-lysine biosynthesis via DAP pathway; DL-2,6-diaminopimelate from LL-2,6-diaminopimelate: step 1/1. Functionally, catalyzes the stereoinversion of LL-2,6-diaminopimelate (L,L-DAP) to meso-diaminopimelate (meso-DAP), a precursor of L-lysine and an essential component of the bacterial peptidoglycan. This is Diaminopimelate epimerase from Geobacillus sp. (strain WCH70).